We begin with the raw amino-acid sequence, 441 residues long: Alpha-methylserine aldolase (441 aa).

K256 carries the N6-(pyridoxal phosphate)lysine modification.

This sequence belongs to the SHMT family. Alpha-methylserine aldolase subfamily. In terms of assembly, homodimer. It depends on pyridoxal 5'-phosphate as a cofactor.

It catalyses the reaction 2-methyl-L-serine = formaldehyde + L-alanine. In terms of biological role, catalyzes the reversible interconversion of alpha-methyl-L-serine to L-alanine and formaldehyde. This Variovorax paradoxus protein is Alpha-methylserine aldolase.